We begin with the raw amino-acid sequence, 1588 residues long: uncharacterized protein (1588 aa).

Over residues 486–495 the composition is skewed to basic and acidic residues; it reads RKRLTSKTED. 2 disordered regions span residues 486-515 and 1146-1176; these read RKRL…KRRP and GGQD…RELN. Residues 498-507 show a composition bias toward polar residues; the sequence is NQWTRDCQNS. Residues 1150–1169 are compositionally biased toward low complexity; it reads NVSDQSENQSENQSLESETS.

The protein localises to the virion. This is an uncharacterized protein from Acanthamoeba polyphaga (Amoeba).